The following is a 334-amino-acid chain: Petrobactin import system permease protein FatD (334 aa).

9 helical membrane passes run 24-44 (FIIAIIVVIILGIISLFTGVY), 64-84 (TVALMLTGAAMAMAGLVMQLI), 98-118 (IEWSSLGLLFVYLLFPAPTLV), 119-139 (QRMTGAIIFSFIGTMIFFLFL), 152-172 (IIGLMLGAVISAVSTFLGLLF), 197-217 (LWLIVIVTLLIFMYANRLTLA), 234-254 (IVLFGTALISVAVGIVAAVIG), 277-297 (SNLPWVCVIGMGTITACDIIS), and 304-324 (FELPVSLILASVGAVVFITIL).

Belongs to the binding-protein-dependent transport system permease family. FecCD subfamily. As to quaternary structure, the complex is composed of two ATP-binding proteins (FatE), two transmembrane proteins (FatC and FatD) and a solute-binding protein (FpuA).

The protein resides in the cell membrane. Part of an ABC transporter complex involved in ferric-petrobactin uptake. Probably responsible for the translocation of the substrate across the membrane. In Bacillus anthracis, this protein is Petrobactin import system permease protein FatD.